Reading from the N-terminus, the 142-residue chain is Large ribosomal subunit protein uL13 (142 aa).

This sequence belongs to the universal ribosomal protein uL13 family. Part of the 50S ribosomal subunit.

In terms of biological role, this protein is one of the early assembly proteins of the 50S ribosomal subunit, although it is not seen to bind rRNA by itself. It is important during the early stages of 50S assembly. This Cronobacter sakazakii (strain ATCC BAA-894) (Enterobacter sakazakii) protein is Large ribosomal subunit protein uL13.